A 466-amino-acid chain; its full sequence is Citrate synthase, mitochondrial (466 aa).

The N-terminal 27 residues, 1 to 27, are a transit peptide targeting the mitochondrion; it reads MALLTAAARLLGAKNSSCLVLAARHAS. Positions 2–21 match the SIFI-degron motif; the sequence is ALLTAAARLLGAKNSSCLVL. Lysine 57 carries the N6-succinyllysine modification. Residue lysine 76 is modified to N6-acetyllysine; alternate. Lysine 76 bears the N6-succinyllysine; alternate mark. N6-succinyllysine is present on residues lysine 103 and lysine 193. Serine 226 carries the post-translational modification Phosphoserine. Residue histidine 301 is part of the active site. Lysine 321 and lysine 327 each carry N6-acetyllysine; alternate. N6-succinyllysine; alternate is present on residues lysine 321 and lysine 327. Residue histidine 347 is part of the active site. Residue arginine 356 participates in oxaloacetate binding. At lysine 375 the chain carries N6-acetyllysine; alternate. An N6-succinyllysine; alternate modification is found at lysine 375. N6-acetyllysine is present on lysine 382. Residue lysine 393 is modified to N6-acetyllysine; alternate. Lysine 393 carries the post-translational modification N6-succinyllysine; alternate. The residue at position 395 (lysine 395) is an N6,N6,N6-trimethyllysine. Residue aspartate 402 is part of the active site. Residues arginine 428 and arginine 448 each contribute to the oxaloacetate site. Lysine 450 is modified (N6-succinyllysine). Lysine 459 carries the N6-acetyllysine; alternate modification. Lysine 459 is modified (N6-succinyllysine; alternate).

The protein belongs to the citrate synthase family. As to quaternary structure, homodimer. In terms of processing, methylated. Trimethylation at Lys-395 by CSKMT decreases citrate synthase activity. In response to mitochondrial stress, the precursor protein is ubiquitinated by the SIFI complex in the cytoplasm before mitochondrial import, leading to its degradation. Within the SIFI complex, UBR4 initiates ubiquitin chain that are further elongated or branched by KCMF1. In terms of tissue distribution, expressed in the head region and flagellum of epididymal sperm.

It is found in the mitochondrion matrix. The enzyme catalyses oxaloacetate + acetyl-CoA + H2O = citrate + CoA + H(+). Its pathway is carbohydrate metabolism; tricarboxylic acid cycle; isocitrate from oxaloacetate: step 1/2. Its function is as follows. Key enzyme of the Krebs tricarboxylic acid cycle which catalyzes the synthesis of citrate from acetyl coenzyme A and oxaloacetate. In Rattus norvegicus (Rat), this protein is Citrate synthase, mitochondrial (Cs).